The primary structure comprises 429 residues: UDP-N-acetylglucosamine 1-carboxyvinyltransferase (429 aa).

22-23 (KN) lines the phosphoenolpyruvate pocket. Arg-102 serves as a coordination point for UDP-N-acetyl-alpha-D-glucosamine. Catalysis depends on Cys-126, which acts as the Proton donor. Residue Cys-126 is modified to 2-(S-cysteinyl)pyruvic acid O-phosphothioketal. UDP-N-acetyl-alpha-D-glucosamine contacts are provided by residues 171-174 (KVSV), Asp-316, and Ile-338.

It belongs to the EPSP synthase family. MurA subfamily.

The protein resides in the cytoplasm. The enzyme catalyses phosphoenolpyruvate + UDP-N-acetyl-alpha-D-glucosamine = UDP-N-acetyl-3-O-(1-carboxyvinyl)-alpha-D-glucosamine + phosphate. It functions in the pathway cell wall biogenesis; peptidoglycan biosynthesis. In terms of biological role, cell wall formation. Adds enolpyruvyl to UDP-N-acetylglucosamine. The sequence is that of UDP-N-acetylglucosamine 1-carboxyvinyltransferase from Azorhizobium caulinodans (strain ATCC 43989 / DSM 5975 / JCM 20966 / LMG 6465 / NBRC 14845 / NCIMB 13405 / ORS 571).